The primary structure comprises 352 residues: UDP-3-O-acylglucosamine N-acyltransferase (352 aa).

H257 acts as the Proton acceptor in catalysis.

This sequence belongs to the transferase hexapeptide repeat family. LpxD subfamily. As to quaternary structure, homotrimer.

It catalyses the reaction a UDP-3-O-[(3R)-3-hydroxyacyl]-alpha-D-glucosamine + a (3R)-hydroxyacyl-[ACP] = a UDP-2-N,3-O-bis[(3R)-3-hydroxyacyl]-alpha-D-glucosamine + holo-[ACP] + H(+). It functions in the pathway bacterial outer membrane biogenesis; LPS lipid A biosynthesis. In terms of biological role, catalyzes the N-acylation of UDP-3-O-acylglucosamine using 3-hydroxyacyl-ACP as the acyl donor. Is involved in the biosynthesis of lipid A, a phosphorylated glycolipid that anchors the lipopolysaccharide to the outer membrane of the cell. The chain is UDP-3-O-acylglucosamine N-acyltransferase from Methylobacterium sp. (strain 4-46).